A 455-amino-acid polypeptide reads, in one-letter code: Regulatory protein LuxO (455 aa).

One can recognise a Response regulatory domain in the interval 1–112 (MVEDTASVAA…RLRVTVNNAI (112 aa)). D47 carries the post-translational modification 4-aspartylphosphate. Residues 132-361 (FIGSSQTMQA…LQNVLRNVVV (230 aa)) enclose the Sigma-54 factor interaction domain. ATP is bound by residues 160 to 167 (GESGTGKE) and 223 to 232 (ADGGTLFLDE).

Functionally, involved in the regulation of different processes depending on the cell density. Acts together with sigma-54 to repress, perhaps indirectly, some genes. The polypeptide is Regulatory protein LuxO (luxO) (Vibrio cholerae serotype O1 (strain ATCC 39315 / El Tor Inaba N16961)).